The following is a 132-amino-acid chain: Fatty acid-binding protein, adipocyte (132 aa).

Position 2 is an N-acetylcysteine (Cys-2). At Ser-13 the chain carries Phosphoserine. At Tyr-20 the chain carries Phosphotyrosine; by Tyr-kinases. A Nuclear localization signal motif is present at residues Lys-22–Lys-32. Arg-127 to Tyr-129 provides a ligand contact to a fatty acid.

The protein belongs to the calycin superfamily. Fatty-acid binding protein (FABP) family. Monomer. Homodimer. Interacts with PPARG.

The protein resides in the cytoplasm. The protein localises to the nucleus. In terms of biological role, lipid transport protein in adipocytes. Binds both long chain fatty acids and retinoic acid. Delivers long-chain fatty acids and retinoic acid to their cognate receptors in the nucleus. FABPs are important elements related to the hibernating state in mammals. This chain is Fatty acid-binding protein, adipocyte (FABP4), found in Ictidomys tridecemlineatus (Thirteen-lined ground squirrel).